The primary structure comprises 910 residues: E3 ubiquitin-protein ligase HUL5 (910 aa).

Methionine 1 is subject to N-acetylmethionine. A disordered region spans residues 1–25 (MLNFTGQTRRRNVNLGNRTRNSKKD). One can recognise an HECT domain in the interval 810–910 (YGGYKEEDQT…INSGARFDLS (101 aa)). The active-site Glycyl thioester intermediate is the cysteine 878.

This sequence belongs to the UBE3C family. Interacts with 19S proteasomes.

It is found in the cytoplasm. Its subcellular location is the cytosol. The protein localises to the nucleus. It carries out the reaction S-ubiquitinyl-[E2 ubiquitin-conjugating enzyme]-L-cysteine + [acceptor protein]-L-lysine = [E2 ubiquitin-conjugating enzyme]-L-cysteine + N(6)-ubiquitinyl-[acceptor protein]-L-lysine.. It functions in the pathway protein modification; protein ubiquitination. Functionally, non-essential E3 ubiquitin-protein ligase that specifically catalyzes 'Lys-29'- and 'Lys-48'-linked polyubiquitin chains. Accepts ubiquitin from an E2 ubiquitin-conjugating enzyme in the form of a thioester and then directly transfers the ubiquitin to targeted substrates. Associates with the proteasome and promotes elongation of ubiquitin chains on substrates bound to the proteasome. Elongation of ubiquitin chains on substrates bound to the proteasome promotes proteasomal processivity. Also promotes ubiquitin elongation of 26S proteasome subunit RPN10. Involved in the stress response required to maintain cell fitness following heat-shock: acts by mediating ubiquitination of cytosolic misfolded proteins, leading to their subsequent degradation. The chain is E3 ubiquitin-protein ligase HUL5 from Saccharomyces cerevisiae (strain ATCC 204508 / S288c) (Baker's yeast).